Here is a 374-residue protein sequence, read N- to C-terminus: Pulmonary surfactant-associated protein D (374 aa).

The signal sequence occupies residues 1–19 (MLPFLSMLVLLVQPLGNLG). S-nitrosocysteine occurs at positions 34 and 39. The segment at 38–222 (MCSPTENGLP…GIKGESGLPD (185 aa)) is disordered. The 177-residue stretch at 45–221 (GLPGRDGRDG…RGIKGESGLP (177 aa)) folds into the Collagen-like domain. The span at 49 to 64 (RDGRDGREGPRGEKGD) shows a compositional bias: basic and acidic residues. Positions 70–79 (PMGLSGLQGP) are enriched in low complexity. N-linked (GlcNAc...) asparagine glycosylation occurs at Asn89. 2 stretches are compositionally biased toward low complexity: residues 137 to 149 (KGEA…VGAP) and 169 to 200 (APGV…RGPP). Positions 203 to 215 (KGDRGVPGDRGIK) are enriched in basic and acidic residues. The stretch at 222–253 (DSAALRQQMEALKGKLQRLEVAFSHYQKAALF) forms a coiled coil. A C-type lectin domain is found at 259–374 (VGDKIFRTAD…GEQRLVICEF (116 aa)). 2 disulfide bridges follow: Cys280–Cys372 and Cys350–Cys364.

This sequence belongs to the SFTPD family. As to quaternary structure, oligomeric complex of 4 set of homotrimers. Post-translationally, S-nitrosylation at Cys-34 and Cys-39 alters the quaternary structure which results in a pro-inflammatory chemoattractive signaling activity with macrophages.

The protein resides in the secreted. It localises to the extracellular space. The protein localises to the extracellular matrix. It is found in the surface film. Functionally, contributes to the lung's defense against inhaled microorganisms, organic antigens and toxins. Interacts with compounds such as bacterial lipopolysaccharides, oligosaccharides and fatty acids and modulates leukocyte action in immune response. May participate in the extracellular reorganization or turnover of pulmonary surfactant. Binds strongly maltose residues and to a lesser extent other alpha-glucosyl moieties. In Mus musculus (Mouse), this protein is Pulmonary surfactant-associated protein D (Sftpd).